Reading from the N-terminus, the 490-residue chain is Transcriptional regulator FleQ (490 aa).

Residue Leu-142 coordinates 3',3'-c-di-GMP. ADP-binding positions include Val-147 and 177–182 (GTGKEV). 3',3'-c-di-GMP contacts are provided by residues 186–189 (NLHY) and 330–341 (ELISRMEHEKRG). Residues Arg-334 and Arg-363 each coordinate ADP.

As to quaternary structure, forms homodimers. Forms homohexamers that inhibit transcription initiation. Interacts with FleN; this complex is formed in the presence as well as in the absence of c-di-GMP or ATP.

C-di-GMP interaction leads to active site obstruction, hexameric ring destabilization thus relieving DNA bending and activating gene transcription. Its function is as follows. AAA+ ATPase enhancer-binding protein that acts as a transcription regulator and plays a role in the modulation of mucin adhesion and flagellar gene expression. In addition to flagella genes, also regulates expression of biofilm-related genes. Functions as a transcriptional repressor in the absence of c-di-GMP and as an activator when c-di-GMP is present. This chain is Transcriptional regulator FleQ, found in Pseudomonas aeruginosa (strain ATCC 15692 / DSM 22644 / CIP 104116 / JCM 14847 / LMG 12228 / 1C / PRS 101 / PAO1).